A 470-amino-acid chain; its full sequence is Iron-sulfur cluster assembly protein SufB (470 aa).

This sequence belongs to the iron-sulfur cluster assembly SufBD family. Component of a complex composed of SufB, SufC and SufD in a stoichiometric ratio of 1:2:1. Interacts with SufC. Interacts with SufD.

It participates in cofactor biosynthesis; iron-sulfur cluster biosynthesis. Functionally, participates in the sulfur mobilization (SUF) pathway for iron-sulfur (Fe-S) cluster biogenesis. As part of a complex consisting of SufB-SufC(2)-SufD, involved in assembly of [4Fe-4S] clusters. Exhibits ATPase activity. In Plasmodium falciparum (isolate 3D7), this protein is Iron-sulfur cluster assembly protein SufB.